Consider the following 1483-residue polypeptide: MSNTPYNSSVPSIASMTQSSVSRSPNMHTATTPGANTSSNSPPLHMSSDSSKIKRKRNRIPLSCTICRKRKVKCDKLRPHCQQCTKTGVAHLCHYMEQTWAEEAEKELLKDNELKKLRERVKSLEKTLSKVHSSPSSNSLKSYNTPESSNLFMGSDEHTTLVNANTGSASSASHMHQQQQQQQQQEQQQDFSRSANANANSSSLSISNKYDNDELDLTKDFDLLHIKSNGTIHLGATHWLSIMKGDPYLKLLWGHIFAMREKLNEWYYQKNSYSKLKSSKCPINHAQAPPSAAAAATRKCPVDHSAFSSGMVAPKEETPLPRKCPVDHTMFSSGMIPPREDTSSQKRCPVDHTMYSAGMMPPKDETPSPFSTKAMIDHNKHTMNPPQSKCPVDHRNYMKDYPSDMANSSSNPASRCPIDHSSMKNTAALPASTHNTIPHHQPQSGSHARSHPAQNRKHDSYMTESEVLATLCEMLPPKRVIALFIEKFFKHLYPAIPILDEQNFKNHVNQMLSLSSMNPTVNNFGMSMPSSSTLENQPITQINLPKLSDSCNLGILIIILRLTWLSIPSNSCEVDLGEESGSFLVPNESSNMSASALTSMAKEESLLLKHETPVEALELCQKYLIKFDELSSISNNNVNLTTVQFAIFYNFYMKSASNDLTTLTNTNNTGMANPGHDSESHQILLSNITQMAFSCGLHRDPDNFPQLNATIPATSQDVSNNGSKKANPSTNPTLNNNMSAATTNSSSRSGSADSRSGSNPVNKKENQVSIERFKHTWRKIWYYIVSMDVNQSLSLGSPRLLRNLRDFSDTKLPSASRIDYVRDIKELIIVKNFTLFFQIDLCIIAVLNHILNVSLARSVRKFELDSLINLLKNLTYGTENVNDVVSSLINKGLLPTSEGGSVDSNNDEIYGLPKLPDILNHGQHNQNLYADGRNTSSSDIDKKLDLPHESTTRALFFSKHMTIRMLLYLLNYILFTHYEPMGSEDPGTNILAKEYAQEALNFAMDGYRNCMIFFNNIRNTNSLFDYMNVILSYPCLDIGHRSLQFIVCLILRAKCGPLTGMRESSIITNGTSSGFNSSVEDEDVKVKQESSDEMKKDDFMKDVNLDSGDSLAEILMSRMLLFQKLTKQLSKKYNYAIRMNKSTGFFVSLLDTPSKKSDSKSGGSSFMLGNWKHPKVSNMSGFLAGDKDQLQKCPVYQDALGFVSPTGANEGSAPMQGMSLQGSTARMGGTQLPPIRSYKPITYTSSNLRRMNETGEAEAKRRRFNDGYIDNNSNNDIPRGISPKPSNGLSSVQPLLSSFSMNQLNGGTIPTVPSLTNITSQMGALPSLDRITTNQINLPDPSRDEAFDNSIKQMTPMTSAFMNANTTIPSSTLNGNMNMNGAGTANTDTSVNGSALSTLTSPQGSDLASNSATQYKPDLEDFLMQNSNFNGLMINPSSLVEVVGGYNDPNNLGRNDAVDFLPVDNVEIDGLVDFYRADFPIWE.

Residues 1–50 show a composition bias toward polar residues; sequence MSNTPYNSSVPSIASMTQSSVSRSPNMHTATTPGANTSSNSPPLHMSSDS. A disordered region spans residues 1-56; the sequence is MSNTPYNSSVPSIASMTQSSVSRSPNMHTATTPGANTSSNSPPLHMSSDSSKIKRK. 6 residues coordinate Zn(2+): Cys64, Cys67, Cys74, Cys81, Cys84, and Cys93. Residues 64-93 constitute a DNA-binding region (zn(2)-C6 fungal-type); that stretch reads CTICRKRKVKCDKLRPHCQQCTKTGVAHLC. Positions 105-134 form a coiled coil; it reads EKELLKDNELKKLRERVKSLEKTLSKVHSS. The segment at 126–208 is disordered; the sequence is KTLSKVHSSP…ANSSSLSISN (83 aa). Positions 130–142 are enriched in low complexity; that stretch reads KVHSSPSSNSLKS. Polar residues-rich tracts occupy residues 143 to 152 and 160 to 176; these read YNTPESSNLF and TLVNANTGSASSASHMH. The span at 177-208 shows a compositional bias: low complexity; it reads QQQQQQQQQEQQQDFSRSANANANSSSLSISN. The heme-responsive; required for HMC formation stretch occupies residues 244–444; the sequence is KGDPYLKLLW…NTIPHHQPQS (201 aa). HRM repeat units follow at residues 280–285, 299–304, 323–328, 347–352, 389–394, and 415–420; these read KCPINH, KCPVDH, RCPVDH, and RCPIDH. Polar residues-rich tracts occupy residues 432–447 and 706–734; these read STHNTIPHHQPQSGSH and QLNATIPATSQDVSNNGSKKANPSTNPTL. Disordered regions lie at residues 432-458 and 706-767; these read STHNTIPHHQPQSGSHARSHPAQNRKH and QLNA…KENQ. A compositionally biased stretch (low complexity) spans 735 to 759; the sequence is NNNMSAATTNSSSRSGSADSRSGSN. Residues 1192-1197 form an HRM 7 repeat; the sequence is KCPVYQ.

As to quaternary structure, binds DNA as a homodimer. Interacts with SRO9 and YDJ1. In the absence of heme, binds to at least four cellular proteins, including YDJ1 and SRO9, forming a high-molecular-weight complex (HMC) which results in repression of its activity and dictates its DNA-binding specificity.

Its subcellular location is the nucleus. Its function is as follows. Regulation of oxygen dependent gene expression. It modulates the expression of Iso-1 (CYP1) and Iso-2 (CYP3) cytochrome c. In response to heme, promotes transcription of genes encoding functions required for respiration, controlling oxidative damage and repression of anaerobic genes. Binds to the sequence 5'-CGGNNNTNNCGG-3'. The protein is Heme-responsive zinc finger transcription factor HAP1 (HAP1) of Saccharomyces cerevisiae (strain Lalvin EC1118 / Prise de mousse) (Baker's yeast).